The sequence spans 833 residues: Leucine--tRNA ligase (833 aa).

The 'HIGH' region motif lies at 41–52; the sequence is PYPSGAGLHVGH. Positions 610–614 match the 'KMSKS' region motif; that stretch reads KMSKS. Lys613 is an ATP binding site.

This sequence belongs to the class-I aminoacyl-tRNA synthetase family.

The protein localises to the cytoplasm. It catalyses the reaction tRNA(Leu) + L-leucine + ATP = L-leucyl-tRNA(Leu) + AMP + diphosphate. The sequence is that of Leucine--tRNA ligase from Streptococcus gordonii (strain Challis / ATCC 35105 / BCRC 15272 / CH1 / DL1 / V288).